The chain runs to 55 residues: Light-harvesting polypeptide B-800/860 beta chain (55 aa).

Over 1–21 the chain is Cytoplasmic; that stretch reads ADANKVWPTGLTVAEAEELHT. Residues 22–44 form a helical membrane-spanning segment; it reads YVTNGFRVFVGIAVVAHVLVFAA. Histidine 38 is an a bacteriochlorophyll binding site. Topologically, residues 45 to 55 are periplasmic; it reads HPWGRGGALVA.

The protein belongs to the antenna complex beta subunit family. In terms of assembly, the core complex is formed by different alpha and beta chains, binding bacteriochlorophyll molecules, and arranged most probably in tetrameric structures disposed around the reaction center. The non-pigmented gamma chains may constitute additional components.

It is found in the cell inner membrane. Its function is as follows. Antenna complexes are light-harvesting systems, which transfer the excitation energy to the reaction centers. The chain is Light-harvesting polypeptide B-800/860 beta chain from Rhodocyclus tenuis (Rhodospirillum tenue).